The following is a 279-amino-acid chain: S-formylglutathione hydrolase (279 aa).

Residues S150, D226, and H258 each act as charge relay system in the active site.

This sequence belongs to the esterase D family.

The catalysed reaction is S-formylglutathione + H2O = formate + glutathione + H(+). Its function is as follows. Serine hydrolase involved in the detoxification of formaldehyde. Hydrolyzes S-formylglutathione to glutathione and formate. This Paracoccus denitrificans (strain Pd 1222) protein is S-formylglutathione hydrolase (fghA).